The chain runs to 111 residues: Large ribosomal subunit protein eL42 (111 aa).

Cys12, Cys15, Cys72, and Cys77 together coordinate Zn(2+).

It belongs to the eukaryotic ribosomal protein eL42 family. In terms of assembly, component of the large ribosomal subunit.

It is found in the cytoplasm. Component of the large ribosomal subunit. The ribosome is a large ribonucleoprotein complex responsible for the synthesis of proteins in the cell. This chain is Large ribosomal subunit protein eL42 (RPL36A), found in Oryctolagus cuniculus (Rabbit).